Here is a 901-residue protein sequence, read N- to C-terminus: Core protein VP3 (901 aa).

This sequence belongs to the orbivirus VP3 family.

It localises to the virion. Functionally, the VP3 protein is one of the five proteins (with VP1, VP4, VP6 and VP7) which form the inner capsid of the virus. The sequence is that of Core protein VP3 (Segment-3) from Bluetongue virus 11 (isolate USA) (BTV 11).